We begin with the raw amino-acid sequence, 388 residues long: Succinate--CoA ligase [ADP-forming] subunit beta (388 aa).

The ATP-grasp domain maps to 9–244; it reads KKLFAEYGLP…PSQDDPREAH (236 aa). Residues Lys46, 53-55, Glu99, Thr102, and Glu107 each bind ATP; that span reads GRG. Mg(2+)-binding residues include Asn199 and Asp213. Substrate contacts are provided by residues Asn264 and 321-323; that span reads GIV.

This sequence belongs to the succinate/malate CoA ligase beta subunit family. As to quaternary structure, heterotetramer of two alpha and two beta subunits. Mg(2+) is required as a cofactor.

It carries out the reaction succinate + ATP + CoA = succinyl-CoA + ADP + phosphate. It catalyses the reaction GTP + succinate + CoA = succinyl-CoA + GDP + phosphate. The protein operates within carbohydrate metabolism; tricarboxylic acid cycle; succinate from succinyl-CoA (ligase route): step 1/1. Succinyl-CoA synthetase functions in the citric acid cycle (TCA), coupling the hydrolysis of succinyl-CoA to the synthesis of either ATP or GTP and thus represents the only step of substrate-level phosphorylation in the TCA. The beta subunit provides nucleotide specificity of the enzyme and binds the substrate succinate, while the binding sites for coenzyme A and phosphate are found in the alpha subunit. The sequence is that of Succinate--CoA ligase [ADP-forming] subunit beta from Aeromonas salmonicida (strain A449).